A 567-amino-acid polypeptide reads, in one-letter code: Oxygen-dependent choline dehydrogenase (567 aa).

An FAD-binding site is contributed by 6 to 35 (DYIIVGAGSAGNTLATRLTEDEGVTVLLLE). The active-site Proton acceptor is the His-475.

The protein belongs to the GMC oxidoreductase family. It depends on FAD as a cofactor.

The catalysed reaction is choline + A = betaine aldehyde + AH2. It carries out the reaction betaine aldehyde + NAD(+) + H2O = glycine betaine + NADH + 2 H(+). It functions in the pathway amine and polyamine biosynthesis; betaine biosynthesis via choline pathway; betaine aldehyde from choline (cytochrome c reductase route): step 1/1. In terms of biological role, involved in the biosynthesis of the osmoprotectant glycine betaine. Catalyzes the oxidation of choline to betaine aldehyde and betaine aldehyde to glycine betaine at the same rate. The protein is Oxygen-dependent choline dehydrogenase of Pseudomonas fluorescens (strain Pf0-1).